The chain runs to 493 residues: GPI alpha-1,6-mannosyltransferase 2 (493 aa).

Residues 1–13 (MWPQDPSRKEVLR) are Cytoplasmic-facing. A helical transmembrane segment spans residues 14–34 (FAVSCRILTLMLQALFNAIIP). The Lumenal portion of the chain corresponds to 35–77 (DHHAEAFSPPRLAPSGFVDQLVEGLLGGLSHWDAEHFLFIAEH). The helical transmembrane segment at 78–98 (GYLYEHNFAFFPGFPLALLVG) threads the bilayer. At 99-113 (TELLRPLRGLLSLRS) the chain is on the cytoplasmic side. The chain crosses the membrane as a helical span at residues 114–134 (CLLISVASLNFLFFMLAAVAL). The Lumenal portion of the chain corresponds to 135-136 (HD). A helical membrane pass occupies residues 137–157 (LGCLVLHCPHQSFYAALLFCL). The Cytoplasmic segment spans residues 158–161 (SPAN). Residues 162–182 (VFLAAGYSEALFALLTFSAMG) traverse the membrane as a helical segment. Topologically, residues 183–192 (QLERGRVWTS) are lumenal. The helical transmembrane segment at 193–213 (VLLFAFATGVRSNGLVSVGFL) threads the bilayer. At 214 to 234 (MHSQCQGFFSSLTMLNPLRQL) the chain is on the cytoplasmic side. A helical transmembrane segment spans residues 235 to 255 (FKLMASLFLSVFTLGLPFALF). Residues 256 to 327 (QYYAYTQFCL…KYYELKQVPN (72 aa)) lie on the Lumenal side of the membrane. Residues 328 to 348 (FLLAAPVAILVAWATWTYVTT) traverse the membrane as a helical segment. Topologically, residues 349 to 378 (HPWLCLTLGLQRSKNNKTLEKPDLGFLSPQ) are cytoplasmic. The helical transmembrane segment at 379-399 (VFVYVVHAAVLLLFGGLCMHV) threads the bilayer. Residues 400–469 (QVLTRFLGSS…HWKTCSPVTR (70 aa)) are Lumenal-facing. The chain crosses the membrane as a helical span at residues 470 to 490 (YILGYFLTYWLLGLLLHCNFL). Residues 491–493 (PWT) are Cytoplasmic-facing.

Belongs to the PIGV family. Not N-glycosylated.

The protein resides in the endoplasmic reticulum membrane. It functions in the pathway glycolipid biosynthesis; glycosylphosphatidylinositol-anchor biosynthesis. Its function is as follows. Alpha-1,6-mannosyltransferase that catalyzes the transfer of the second mannose, via an alpha-1,6 bond, from a dolichol-phosphate-mannose (Dol-P-Man) to the alpha-D-Man-(1-&gt;4)-alpha-D-GlcN-(1-&gt;6)-(1-radyl,2-acyl-sn-glycero-3-phospho)-2-acyl-inositol (also termed H2) intermediate to generate an alpha-D-Man-(1-&gt;6)-alpha-D-Man-(1-&gt;4)-alpha-D-GlcN-(1-&gt;6)-(1-radyl,2-acyl-sn-glycero-3-phospho)-2-acyl-inositol (also termed H3) and participates in the seventh step of the glycosylphosphatidylinositol-anchor biosynthesis. Also transfers the second mannose on a 2-PEtn-alpha-D-Man-(1-&gt;4)-alpha-D-GlcN-(1-&gt;6)-(1-radyl,2-acyl-sn-glycero-3-phospho)-2-acyl-inositol (also termed H5). The chain is GPI alpha-1,6-mannosyltransferase 2 from Homo sapiens (Human).